A 394-amino-acid chain; its full sequence is Tubulin-like protein CetZ4 (394 aa).

GTP is bound by residues 10 to 14 (QAGGK), 110 to 112 (GTG), Glu-142, Asn-169, and Asn-187.

This sequence belongs to the CetZ family.

Its subcellular location is the cytoplasm. Functionally, involved in cell shape control. This chain is Tubulin-like protein CetZ4, found in Haloferax volcanii (strain ATCC 29605 / DSM 3757 / JCM 8879 / NBRC 14742 / NCIMB 2012 / VKM B-1768 / DS2) (Halobacterium volcanii).